The primary structure comprises 242 residues: RxLR effector protein PexRD15 (242 aa).

An N-terminal signal peptide occupies residues 1 to 24 (MMKSLYAVNLVLLLLLAFFAPAPA). The RxLR-dEER motif lies at 48 to 66 (RLLRAHSSDKEEQKEEEER).

This sequence belongs to the RxLR effector family.

It localises to the secreted. Its subcellular location is the host cell membrane. Effector that enhances P.infestans colonization of Nicotiana benthamiana leaves. In Phytophthora infestans (strain T30-4) (Potato late blight agent), this protein is RxLR effector protein PexRD15.